The chain runs to 316 residues: Olfactory receptor 2AG2 (316 aa).

The Extracellular segment spans residues 1–30 (MELRNSTLGSGFILVGILNDSGSPELLYAT). N-linked (GlcNAc...) asparagine glycans are attached at residues Asn5 and Asn19. A helical transmembrane segment spans residues 31–51 (FTILYMLALTSNGLLLLAITI). At 52 to 56 (EARLH) the chain is on the cytoplasmic side. The helical transmembrane segment at 57-77 (MPMYLLLGQLSLMDLLFTSVV) threads the bilayer. Residues 78-97 (TPKALADFLRRENTISFGGC) lie on the Extracellular side of the membrane. Cys97 and Cys179 are disulfide-bonded. Residues 98-118 (ALQMFLALTMGSAEDLLLAFM) traverse the membrane as a helical segment. At 119–139 (AYDRYVAICHPLKYMTLMSPR) the chain is on the cytoplasmic side. The helical transmembrane segment at 140 to 160 (VCWIMVATSWILASLIAIGHT) threads the bilayer. Residues 161–205 (MYTMHLPFCVSWEIRHLLCEIPPLLKLACADTSRYELIIYVTGVT) lie on the Extracellular side of the membrane. The chain crosses the membrane as a helical span at residues 206 to 226 (FLLLPISAIVASYTLVLFTVL). At 227-244 (RMPSNEGRKKALVTCSSH) the chain is on the cytoplasmic side. A helical membrane pass occupies residues 245–265 (LIVVGMFYGAATFMYVLPSSF). At 266–271 (HSPKQD) the chain is on the extracellular side. The chain crosses the membrane as a helical span at residues 272-292 (NIISVFYTIVTPALNPLIYSL). Over 293–316 (RNKEVMRALRRVLGKYILLAHSTL) the chain is Cytoplasmic.

The protein belongs to the G-protein coupled receptor 1 family.

The protein localises to the cell membrane. Its function is as follows. Odorant receptor. The chain is Olfactory receptor 2AG2 (OR2AG2) from Homo sapiens (Human).